A 252-amino-acid polypeptide reads, in one-letter code: PF03932 family protein CutC (252 aa).

It belongs to the CutC family.

It localises to the cytoplasm. This Serratia proteamaculans (strain 568) protein is PF03932 family protein CutC.